A 507-amino-acid chain; its full sequence is Phosphoprotein (507 aa).

Residues 1 to 48 (MAEEQARHVKNGLECIRALKAEPIGSLAIEEAMAAWSEISDNPGQERA) form an interaction with N0 region. Disordered regions lie at residues 41-99 (DNPG…PPRN), 134-163 (GLDG…TEGY), 201-231 (NNFP…IKKG), and 250-273 (GATQ…GNVP). The residue at position 86 (Ser86) is a Phosphoserine. Over residues 134–145 (GLDGDSTLSGGD) the composition is skewed to low complexity. Acidic residues predominate over residues 146–160 (NESENSDVDIGEPDT). The residue at position 151 (Ser151) is a Phosphoserine. The span at 260–270 (SEPSGPGAPAG) shows a compositional bias: low complexity. A multimerization region spans residues 304 to 376 (GDYYDDELFS…LSSIMIAIPG (73 aa)). Interaction with the L polymerase regions lie at residues 361-377 (STLE…IPGL) and 396-410 (PIIG…AEVL). Residues 457–507 (GPASRSVIRSIIKSSRLEEDRKRYLMTLLDDIKGANDLAKFHQMLMKIIMK) form a x domain (XD) region. The interaction with the nucleocapsid (N-RNA) stretch occupies residues 459 to 507 (ASRSVIRSIIKSSRLEEDRKRYLMTLLDDIKGANDLAKFHQMLMKIIMK).

The protein belongs to the morbillivirus P protein family. Homotetramer. Interacts (via multimerization domain and XD domain) with polymerase L; this interaction forms the polymerase L-P complex. Interacts (via N-terminus) with N0 (via Ncore); this interaction allows P to chaperon N0 to avoid N polymerization and non-specific RNA binding before encapsidation. Interacts (via C-terminus) with N-RNA template (via Ntail); this interaction maintains the P/L complex anchored to the nucleocapsid template during the sequential transcription. Interacts (via C-terminus) with protein C this interaction allows C to associate with the ribonucleocapsid. In terms of processing, phosphorylation on serines by host CK2 is necessary for the formation of viral factories.

Its function is as follows. Essential cofactor of the RNA polymerase L that plays a central role in the transcription and replication by forming the polymerase complex with RNA polymerase L and recruiting L to the genomic N-RNA template for RNA synthesis. Also plays a central role in the encapsidation of nascent RNA chains by forming the encapsidation complex with the nucleocapsid protein N (N-P complex). Acts as a chaperone for newly synthesized free N protein, so-called N0, allowing encapsidation of nascent RNA chains during replication. The nucleoprotein protein N prevents excessive phosphorylation of P, which leads to down-regulation of viral transcription/ replication. Participates, together with N, in the formation of viral factories (viroplasms), which are large inclusions in the host cytoplasm where replication takes place. The protein is Phosphoprotein (P/V) of Measles virus (strain Edmonston-AIK-C vaccine) (MeV).